We begin with the raw amino-acid sequence, 1400 residues long: DNA-directed RNA polymerase subunit beta' (1400 aa).

Zn(2+) is bound by residues cysteine 71, cysteine 73, cysteine 86, and cysteine 89. Positions 462, 464, and 466 each coordinate Mg(2+). Zn(2+) is bound by residues cysteine 811, cysteine 885, cysteine 892, and cysteine 895.

This sequence belongs to the RNA polymerase beta' chain family. As to quaternary structure, the RNAP catalytic core consists of 2 alpha, 1 beta, 1 beta' and 1 omega subunit. When a sigma factor is associated with the core the holoenzyme is formed, which can initiate transcription. Mg(2+) is required as a cofactor. It depends on Zn(2+) as a cofactor.

The enzyme catalyses RNA(n) + a ribonucleoside 5'-triphosphate = RNA(n+1) + diphosphate. In terms of biological role, DNA-dependent RNA polymerase catalyzes the transcription of DNA into RNA using the four ribonucleoside triphosphates as substrates. This is DNA-directed RNA polymerase subunit beta' from Brucella anthropi (strain ATCC 49188 / DSM 6882 / CCUG 24695 / JCM 21032 / LMG 3331 / NBRC 15819 / NCTC 12168 / Alc 37) (Ochrobactrum anthropi).